The chain runs to 401 residues: Acetate kinase (401 aa).

N9 is a Mg(2+) binding site. An ATP-binding site is contributed by K16. Residue R88 coordinates substrate. Residue D147 is the Proton donor/acceptor of the active site. ATP is bound by residues 207 to 211 (HLGNG), 282 to 284 (DCR), and 333 to 337 (GIGEN). Position 388 (E388) interacts with Mg(2+).

This sequence belongs to the acetokinase family. As to quaternary structure, homodimer. Mg(2+) is required as a cofactor. Mn(2+) serves as cofactor.

It localises to the cytoplasm. The enzyme catalyses acetate + ATP = acetyl phosphate + ADP. It functions in the pathway metabolic intermediate biosynthesis; acetyl-CoA biosynthesis; acetyl-CoA from acetate: step 1/2. Its function is as follows. Catalyzes the formation of acetyl phosphate from acetate and ATP. Can also catalyze the reverse reaction. This chain is Acetate kinase, found in Haemophilus influenzae (strain ATCC 51907 / DSM 11121 / KW20 / Rd).